A 392-amino-acid chain; its full sequence is Galactokinase (392 aa).

Alpha-D-galactose contacts are provided by Arg37, Glu43, His44, and Asp46. ATP-binding residues include Gly136, Gly138, Ser140, and Ser141. Asp186 lines the alpha-D-galactose pocket. Asp186 (proton acceptor) is an active-site residue. A Phosphoserine modification is found at Ser230. Position 236 (Tyr236) interacts with alpha-D-galactose.

Belongs to the GHMP kinase family. GalK subfamily. As to quaternary structure, homodimer.

It catalyses the reaction alpha-D-galactose + ATP = alpha-D-galactose 1-phosphate + ADP + H(+). The protein operates within carbohydrate metabolism; galactose metabolism. Functionally, catalyzes the transfer of a phosphate from ATP to alpha-D-galactose and participates in the first committed step in the catabolism of galactose. In Mus musculus (Mouse), this protein is Galactokinase (Galk1).